Reading from the N-terminus, the 433-residue chain is MSKIVKVIGREIIDSRGNPTVEAEVHLEGGFVGMAAAPSGASTGSREALELRDGDKSRFLGKGVLKALEAVNGPIAQALLGKDAKDQATVDQIMIDLDGTENKSKFGANAILAVSLANAKAAAAAKGMPLYAHIAELNGTPGVYSMPLPMMNIINGGEHADNNVDIQEFMIQPVGAKTLKEAVRMGAEVFHNLAKVLKSKGYNTAVGDEGGFAPNLKSNAEALEVIAEAVAAAGYKLGTDITLAMDCAASEFYDAEKKEYNLKGEGRVFTSNGFSDFLADLTTKFPIVSIEDGLDESDWDGFAYQTAELGKKIQIVGDDLFVTNTKILKRGIDNGIANSILIKFNQIGSLTETLAAIKMAKDAGYTAVISHRSGETEDATIADLAVGTAAGQIKTGSMSRSDRVAKYNQLIRIEEALGAKAPFRGLKEVKNQA.

Gln167 contacts (2R)-2-phosphoglycerate. Residue Glu209 is the Proton donor of the active site. 3 residues coordinate Mg(2+): Asp246, Glu291, and Asp318. (2R)-2-phosphoglycerate contacts are provided by Lys343, Arg372, Ser373, and Lys394. Catalysis depends on Lys343, which acts as the Proton acceptor.

It belongs to the enolase family. Component of the RNA degradosome, a multiprotein complex involved in RNA processing and mRNA degradation. The cofactor is Mg(2+).

It is found in the cytoplasm. Its subcellular location is the secreted. The protein resides in the cell surface. It carries out the reaction (2R)-2-phosphoglycerate = phosphoenolpyruvate + H2O. Its pathway is carbohydrate degradation; glycolysis; pyruvate from D-glyceraldehyde 3-phosphate: step 4/5. In terms of biological role, catalyzes the reversible conversion of 2-phosphoglycerate (2-PG) into phosphoenolpyruvate (PEP). It is essential for the degradation of carbohydrates via glycolysis. The polypeptide is Enolase (Aeromonas hydrophila subsp. hydrophila (strain ATCC 7966 / DSM 30187 / BCRC 13018 / CCUG 14551 / JCM 1027 / KCTC 2358 / NCIMB 9240 / NCTC 8049)).